Consider the following 166-residue polypeptide: Cofilin-1 (166 aa).

N-acetylalanine is present on Ala2. Phosphoserine; by NRK is present on Ser3. The 150-residue stretch at 4 to 153 (GVAVSDGVIK…KDRCTLAEKL (150 aa)) folds into the ADF-H domain. At Ser8 the chain carries Phosphoserine. Lys13 is subject to N6-acetyllysine. The residue at position 25 (Thr25) is a Phosphothreonine. The Nuclear localization signal signature appears at 30–34 (KKRKK). Ser41 carries the post-translational modification Phosphoserine. The residue at position 63 (Thr63) is a Phosphothreonine. Tyr68 is modified (phosphotyrosine). Position 73 is an N6-acetyllysine (Lys73). Tyr82 carries the phosphotyrosine modification. Position 108 is a phosphoserine (Ser108). A Glycyl lysine isopeptide (Lys-Gly) (interchain with G-Cter in SUMO2) cross-link involves residue Lys132. A Phosphotyrosine modification is found at Tyr140. At Lys144 the chain carries N6-acetyllysine. Ser156 is modified (phosphoserine).

Belongs to the actin-binding proteins ADF family. Can bind G- and F-actin in a 1:1 ratio of cofilin to actin. It is a major component of intranuclear and cytoplasmic actin rods. Interacts with the subcortical maternal complex (SCMC) via interaction with TLE6 isoform 1 and NLRP5. Interacts with C9orf72. As to quaternary structure, (Microbial infection) Interacts with human respiratory syncytial virus (HRSV) matrix protein; this interaction probably facilitates viral replication. In terms of processing, inactivated by phosphorylation on Ser-3. Phosphorylated on Ser-3 in resting cells. Dephosphorylated by PDXP/chronophin; this restores its activity in promoting actin filament depolymerization. The phosphorylation of Ser-24 may prevent recognition of the nuclear localization signal. Phosphorylated via a ARRB1-RAC1-LIMK1-PAK1 cascade upon active ligand stimulation of atypical chemokine receptor ACKR2. In terms of tissue distribution, widely distributed in various tissues.

It localises to the nucleus matrix. The protein resides in the cytoplasm. It is found in the cytoskeleton. Its subcellular location is the cell projection. The protein localises to the ruffle membrane. It localises to the lamellipodium membrane. The protein resides in the lamellipodium. It is found in the growth cone. Its subcellular location is the axon. Its function is as follows. Binds to F-actin and exhibits pH-sensitive F-actin depolymerizing activity. In conjunction with the subcortical maternal complex (SCMC), plays an essential role for zygotes to progress beyond the first embryonic cell divisions via regulation of actin dynamics. Required for the centralization of the mitotic spindle and symmetric division of zygotes. Plays a role in the regulation of cell morphology and cytoskeletal organization in epithelial cells. Required for the up-regulation of atypical chemokine receptor ACKR2 from endosomal compartment to cell membrane, increasing its efficiency in chemokine uptake and degradation. Required for neural tube morphogenesis and neural crest cell migration. The chain is Cofilin-1 (CFL1) from Homo sapiens (Human).